The following is a 357-amino-acid chain: Glycerol-3-phosphate dehydrogenase [NAD(P)+] (357 aa).

The NADPH site is built by serine 30, phenylalanine 31, arginine 51, and lysine 124. Sn-glycerol 3-phosphate contacts are provided by lysine 124 and glycine 152. Alanine 156 contacts NADPH. The sn-glycerol 3-phosphate site is built by lysine 207, aspartate 260, serine 270, arginine 271, and asparagine 272. Lysine 207 serves as the catalytic Proton acceptor. Residue arginine 271 coordinates NADPH. Residue glutamate 297 coordinates NADPH.

This sequence belongs to the NAD-dependent glycerol-3-phosphate dehydrogenase family.

Its subcellular location is the cytoplasm. The enzyme catalyses sn-glycerol 3-phosphate + NAD(+) = dihydroxyacetone phosphate + NADH + H(+). It catalyses the reaction sn-glycerol 3-phosphate + NADP(+) = dihydroxyacetone phosphate + NADPH + H(+). Its pathway is membrane lipid metabolism; glycerophospholipid metabolism. Its function is as follows. Catalyzes the reduction of the glycolytic intermediate dihydroxyacetone phosphate (DHAP) to sn-glycerol 3-phosphate (G3P), the key precursor for phospholipid synthesis. This is Glycerol-3-phosphate dehydrogenase [NAD(P)+] from Acinetobacter baylyi (strain ATCC 33305 / BD413 / ADP1).